The chain runs to 186 residues: T-cell receptor-associated transmembrane adapter 1 (186 aa).

At Met1–Cys7 the chain is on the extracellular side. Residues Pro8–Phe28 traverse the membrane as a helical; Signal-anchor for type III membrane protein segment. At Asn29–Asn186 the chain is on the cytoplasmic side. Position 46 is a phosphoserine (Ser46). Phosphotyrosine is present on Tyr79. An interaction with PIK3R1 region spans residues Tyr79–Met82. The tract at residues Ser116–Leu140 is disordered. A compositionally biased stretch (basic residues) spans Lys118–Asn128. The span at Phe131–Leu140 shows a compositional bias: basic and acidic residues.

In terms of assembly, homodimer; disulfide-linked. Interacts with CD3Z. When phosphorylated, interacts with PIK3R1. Post-translationally, phosphorylated on tyrosines by LCK or FYN upon TCR activation. Strongly expressed in thymus, and to a lesser extent in spleen, lymph node and peripheral blood lymphocytes. Present in T-cells and NK cells, but not B-cells (at protein level).

The protein localises to the cell membrane. Functionally, stabilizes the TCR (T-cell antigen receptor)/CD3 complex at the surface of T-cells. The sequence is that of T-cell receptor-associated transmembrane adapter 1 (TRAT1) from Homo sapiens (Human).